The following is a 303-amino-acid chain: D-alanine--D-alanine ligase (303 aa).

Positions 102–298 (RILLAAAGLP…YPELCDWMVR (197 aa)) constitute an ATP-grasp domain. Residue 128–181 (PLPAPYVIKPVAEGSSVGVEIVRTGDNRRAEIARTWRFGKEALVESFIPGRELT) coordinates ATP. 3 residues coordinate Mg(2+): aspartate 251, glutamate 265, and asparagine 267.

It belongs to the D-alanine--D-alanine ligase family. Mg(2+) serves as cofactor. Requires Mn(2+) as cofactor.

It localises to the cytoplasm. The catalysed reaction is 2 D-alanine + ATP = D-alanyl-D-alanine + ADP + phosphate + H(+). It participates in cell wall biogenesis; peptidoglycan biosynthesis. Functionally, cell wall formation. The polypeptide is D-alanine--D-alanine ligase (Gluconobacter oxydans (strain 621H) (Gluconobacter suboxydans)).